A 142-amino-acid chain; its full sequence is Large ribosomal subunit protein uL11 (142 aa).

The protein belongs to the universal ribosomal protein uL11 family. Part of the ribosomal stalk of the 50S ribosomal subunit. Interacts with L10 and the large rRNA to form the base of the stalk. L10 forms an elongated spine to which L12 dimers bind in a sequential fashion forming a multimeric L10(L12)X complex. In terms of processing, one or more lysine residues are methylated.

Its function is as follows. Forms part of the ribosomal stalk which helps the ribosome interact with GTP-bound translation factors. This is Large ribosomal subunit protein uL11 from Ruthia magnifica subsp. Calyptogena magnifica.